Consider the following 356-residue polypeptide: MSLQAIVYEDNKLSVLDQLLLPHEHKYIPIKSVEDAYSVIKNMQVRGAPAIAIVAALAVAVSLVNVKTDDLRNYVIESFERLKQSRPTAVNLFQIAYKMRKLAEAYEGEEIRVVVVKEAEDLLARDLRDNHTIGELGSEYVLKLVNKPRLTILTHCNTGSLATSGYGTALGIIRSLNEKGAIERVYCTETRPNNQGSRLTAYELLYDNIASTLITDSTAASIMPKIDAVIVGCDRVARNGDTANKIGTLSLAILAKHFNVPFIVAGPSFSIDMTLPDGEQTKIEERPSRELVMVRGPVVRDFTTHQFGARESVHIAPINVKAYCPVFDVTPADLISAVVTEKAVFTKGPNGYEFKW.

Catalysis depends on Asp234, which acts as the Proton donor.

It belongs to the eIF-2B alpha/beta/delta subunits family. MtnA subfamily.

The protein localises to the cytoplasm. It is found in the nucleus. It catalyses the reaction 5-(methylsulfanyl)-alpha-D-ribose 1-phosphate = 5-(methylsulfanyl)-D-ribulose 1-phosphate. It functions in the pathway amino-acid biosynthesis; L-methionine biosynthesis via salvage pathway; L-methionine from S-methyl-5-thio-alpha-D-ribose 1-phosphate: step 1/6. Its function is as follows. Catalyzes the interconversion of methylthioribose-1-phosphate (MTR-1-P) into methylthioribulose-1-phosphate (MTRu-1-P). In Schizosaccharomyces japonicus (strain yFS275 / FY16936) (Fission yeast), this protein is Methylthioribose-1-phosphate isomerase (mri1).